We begin with the raw amino-acid sequence, 512 residues long: Lysine--tRNA ligase (512 aa).

Residues glutamate 408 and glutamate 415 each contribute to the Mg(2+) site.

This sequence belongs to the class-II aminoacyl-tRNA synthetase family. Homodimer. It depends on Mg(2+) as a cofactor.

Its subcellular location is the cytoplasm. It carries out the reaction tRNA(Lys) + L-lysine + ATP = L-lysyl-tRNA(Lys) + AMP + diphosphate. The chain is Lysine--tRNA ligase from Prochlorococcus marinus (strain MIT 9515).